A 218-amino-acid chain; its full sequence is Large ribosomal subunit protein uL3 (218 aa).

The segment at 127-167 is disordered; sequence GFSRGPMSHGSKNHREPGSTGAGTTPGRIYPGKRMAGRYGG.

This sequence belongs to the universal ribosomal protein uL3 family. Part of the 50S ribosomal subunit. Forms a cluster with proteins L14 and L19.

In terms of biological role, one of the primary rRNA binding proteins, it binds directly near the 3'-end of the 23S rRNA, where it nucleates assembly of the 50S subunit. The sequence is that of Large ribosomal subunit protein uL3 from Prochlorococcus marinus (strain MIT 9303).